A 680-amino-acid polypeptide reads, in one-letter code: tRNA 5-methylaminomethyl-2-thiouridine biosynthesis bifunctional protein MnmC (680 aa).

A tRNA (mnm(5)s(2)U34)-methyltransferase region spans residues 1-267 (MTAEPNKPCQ…MAAILSSDAP (267 aa)). The segment at 273 to 680 (IGGGLASAHL…LRKLLKGKAL (408 aa)) is FAD-dependent cmnm(5)s(2)U34 oxidoreductase.

It in the N-terminal section; belongs to the methyltransferase superfamily. tRNA (mnm(5)s(2)U34)-methyltransferase family. In the C-terminal section; belongs to the DAO family. It depends on FAD as a cofactor.

Its subcellular location is the cytoplasm. It catalyses the reaction 5-aminomethyl-2-thiouridine(34) in tRNA + S-adenosyl-L-methionine = 5-methylaminomethyl-2-thiouridine(34) in tRNA + S-adenosyl-L-homocysteine + H(+). Functionally, catalyzes the last two steps in the biosynthesis of 5-methylaminomethyl-2-thiouridine (mnm(5)s(2)U) at the wobble position (U34) in tRNA. Catalyzes the FAD-dependent demodification of cmnm(5)s(2)U34 to nm(5)s(2)U34, followed by the transfer of a methyl group from S-adenosyl-L-methionine to nm(5)s(2)U34, to form mnm(5)s(2)U34. This is tRNA 5-methylaminomethyl-2-thiouridine biosynthesis bifunctional protein MnmC from Shewanella putrefaciens (strain CN-32 / ATCC BAA-453).